The following is a 618-amino-acid chain: Dihydroxy-acid dehydratase (618 aa).

Asp81 is a Mg(2+) binding site. Cys122 lines the [2Fe-2S] cluster pocket. Positions 123 and 124 each coordinate Mg(2+). Lys124 is subject to N6-carboxylysine. Position 195 (Cys195) interacts with [2Fe-2S] cluster. Glu491 contributes to the Mg(2+) binding site. The active-site Proton acceptor is the Ser517.

This sequence belongs to the IlvD/Edd family. Homodimer. The cofactor is [2Fe-2S] cluster. Requires Mg(2+) as cofactor.

The catalysed reaction is (2R)-2,3-dihydroxy-3-methylbutanoate = 3-methyl-2-oxobutanoate + H2O. It carries out the reaction (2R,3R)-2,3-dihydroxy-3-methylpentanoate = (S)-3-methyl-2-oxopentanoate + H2O. Its pathway is amino-acid biosynthesis; L-isoleucine biosynthesis; L-isoleucine from 2-oxobutanoate: step 3/4. It functions in the pathway amino-acid biosynthesis; L-valine biosynthesis; L-valine from pyruvate: step 3/4. In terms of biological role, functions in the biosynthesis of branched-chain amino acids. Catalyzes the dehydration of (2R,3R)-2,3-dihydroxy-3-methylpentanoate (2,3-dihydroxy-3-methylvalerate) into 2-oxo-3-methylpentanoate (2-oxo-3-methylvalerate) and of (2R)-2,3-dihydroxy-3-methylbutanoate (2,3-dihydroxyisovalerate) into 2-oxo-3-methylbutanoate (2-oxoisovalerate), the penultimate precursor to L-isoleucine and L-valine, respectively. The chain is Dihydroxy-acid dehydratase from Rhodopseudomonas palustris (strain TIE-1).